The primary structure comprises 172 residues: Large ribosomal subunit protein uL10 (172 aa).

The protein belongs to the universal ribosomal protein uL10 family. Part of the ribosomal stalk of the 50S ribosomal subunit. The N-terminus interacts with L11 and the large rRNA to form the base of the stalk. The C-terminus forms an elongated spine to which L12 dimers bind in a sequential fashion forming a multimeric L10(L12)X complex.

Forms part of the ribosomal stalk, playing a central role in the interaction of the ribosome with GTP-bound translation factors. In Bartonella bacilliformis (strain ATCC 35685 / KC583 / Herrer 020/F12,63), this protein is Large ribosomal subunit protein uL10.